Consider the following 112-residue polypeptide: Cell cycle protein GpsB (112 aa).

Positions 32-75 (LDDIIKDYETYISTIEELRQENTRLKEEVKQAKKRQEAAQTTVS) form a coiled coil.

The protein belongs to the GpsB family. In terms of assembly, forms polymers through the coiled coil domains. Interacts with PBP1, MreC and EzrA.

The protein localises to the cytoplasm. Functionally, divisome component that associates with the complex late in its assembly, after the Z-ring is formed, and is dependent on DivIC and PBP2B for its recruitment to the divisome. Together with EzrA, is a key component of the system that regulates PBP1 localization during cell cycle progression. Its main role could be the removal of PBP1 from the cell pole after pole maturation is completed. Also contributes to the recruitment of PBP1 to the division complex. Not essential for septum formation. This chain is Cell cycle protein GpsB, found in Streptococcus mutans serotype c (strain ATCC 700610 / UA159).